A 338-amino-acid polypeptide reads, in one-letter code: Nicotinate-nucleotide--dimethylbenzimidazole phosphoribosyltransferase (338 aa).

The Proton acceptor role is filled by E305.

This sequence belongs to the CobT family.

The enzyme catalyses 5,6-dimethylbenzimidazole + nicotinate beta-D-ribonucleotide = alpha-ribazole 5'-phosphate + nicotinate + H(+). The protein operates within nucleoside biosynthesis; alpha-ribazole biosynthesis; alpha-ribazole from 5,6-dimethylbenzimidazole: step 1/2. Functionally, catalyzes the synthesis of alpha-ribazole-5'-phosphate from nicotinate mononucleotide (NAMN) and 5,6-dimethylbenzimidazole (DMB). This Sinorhizobium fredii (strain NBRC 101917 / NGR234) protein is Nicotinate-nucleotide--dimethylbenzimidazole phosphoribosyltransferase.